The primary structure comprises 478 residues: Aspartyl/glutamyl-tRNA(Asn/Gln) amidotransferase subunit B (478 aa).

The protein belongs to the GatB/GatE family. GatB subfamily. As to quaternary structure, heterotrimer of A, B and C subunits.

It carries out the reaction L-glutamyl-tRNA(Gln) + L-glutamine + ATP + H2O = L-glutaminyl-tRNA(Gln) + L-glutamate + ADP + phosphate + H(+). It catalyses the reaction L-aspartyl-tRNA(Asn) + L-glutamine + ATP + H2O = L-asparaginyl-tRNA(Asn) + L-glutamate + ADP + phosphate + 2 H(+). Allows the formation of correctly charged Asn-tRNA(Asn) or Gln-tRNA(Gln) through the transamidation of misacylated Asp-tRNA(Asn) or Glu-tRNA(Gln) in organisms which lack either or both of asparaginyl-tRNA or glutaminyl-tRNA synthetases. The reaction takes place in the presence of glutamine and ATP through an activated phospho-Asp-tRNA(Asn) or phospho-Glu-tRNA(Gln). This is Aspartyl/glutamyl-tRNA(Asn/Gln) amidotransferase subunit B from Alkalilimnicola ehrlichii (strain ATCC BAA-1101 / DSM 17681 / MLHE-1).